The primary structure comprises 397 residues: Bifunctional enzyme IspD/IspF (397 aa).

Residues 1–233 (MCAKKYKIAA…KLLFEEPKFR (233 aa)) form a 2-C-methyl-D-erythritol 4-phosphate cytidylyltransferase region. The segment at 233–397 (RVGAGYDIHK…VLLHTNFYWK (165 aa)) is 2-C-methyl-D-erythritol 2,4-cyclodiphosphate synthase. A divalent metal cation-binding residues include Asp239 and His241. Residues 239-241 (DIH) and 270-271 (HS) each bind 4-CDP-2-C-methyl-D-erythritol 2-phosphate. An a divalent metal cation-binding site is contributed by His278. 4-CDP-2-C-methyl-D-erythritol 2-phosphate-binding positions include 292 to 294 (DIG), 368 to 371 (TTAE), Tyr375, and Arg378.

In the N-terminal section; belongs to the IspD/TarI cytidylyltransferase family. IspD subfamily. It in the C-terminal section; belongs to the IspF family. It depends on a divalent metal cation as a cofactor.

The catalysed reaction is 2-C-methyl-D-erythritol 4-phosphate + CTP + H(+) = 4-CDP-2-C-methyl-D-erythritol + diphosphate. The enzyme catalyses 4-CDP-2-C-methyl-D-erythritol 2-phosphate = 2-C-methyl-D-erythritol 2,4-cyclic diphosphate + CMP. The protein operates within isoprenoid biosynthesis; isopentenyl diphosphate biosynthesis via DXP pathway; isopentenyl diphosphate from 1-deoxy-D-xylulose 5-phosphate: step 2/6. It functions in the pathway isoprenoid biosynthesis; isopentenyl diphosphate biosynthesis via DXP pathway; isopentenyl diphosphate from 1-deoxy-D-xylulose 5-phosphate: step 4/6. Functionally, bifunctional enzyme that catalyzes the formation of 4-diphosphocytidyl-2-C-methyl-D-erythritol from CTP and 2-C-methyl-D-erythritol 4-phosphate (MEP) (IspD), and catalyzes the conversion of 4-diphosphocytidyl-2-C-methyl-D-erythritol 2-phosphate (CDP-ME2P) to 2-C-methyl-D-erythritol 2,4-cyclodiphosphate (ME-CPP) with a corresponding release of cytidine 5-monophosphate (CMP) (IspF). This chain is Bifunctional enzyme IspD/IspF, found in Wolbachia pipientis wMel.